The chain runs to 241 residues: Carboxysome assembly protein CcmN (241 aa).

Residues 123 to 206 (GASSPTTDSV…PTAPTVVTTA (84 aa)) form a disordered region. Over residues 185-195 (QISSNRSPGES) the composition is skewed to polar residues. Positions 196-206 (TPTAPTVVTTA) are enriched in low complexity. The Encapsulation peptide motif lies at 219–241 (VVGQVYINQLLLTLFPERRYFSS).

The protein belongs to the CcmN family. In terms of assembly, interacts with full-length and the N-terminal 249 residues of CcmM; a probable CcmM-CcaA-CcmN complex can also be isolated. Interacts with CcmK.

The protein localises to the carboxysome. Required for carboxysome formation; the N-terminus interacts with CcmM which itself binds RuBisCO (ribulose bisphosphate carboxylase, rbcL-rbcS). May also contact shell protein CcmK to help assemble the carboxysome. In terms of biological role, beta-carboxysome assembly initiates when soluble RuBisCO is condensed into a liquid matrix in a pre-carboxysome by the RbcS-like domains of probably both forms of CcmM. CcmN interacts with the N-terminus of full-length CcmM, and then recruits the CcmK major shell protein via CcmN's encapsulation peptide. Shell formation requires CcmK proteins and CcmO. CcmL caps the otherwise elongated carboxysome. Once fully encapsulated carboxysomes are formed, they migrate within the cell probably via interactions with the cytoskeleton. The polypeptide is Carboxysome assembly protein CcmN (Synechocystis sp. (strain ATCC 27184 / PCC 6803 / Kazusa)).